The following is a 162-amino-acid chain: MQKEPMTIYGYEKLQRELKELKEVERPQIVKEIDIARGHGDLKENAEYHAAKERQLFIEARINELSEILSRTQVVDPATITHEKISFGSTFKVMDLDTEFVYEYTIVGAPESNPDRGFISFYSPLARQLIGKVPGDEINAKLPNGEIDYEVLEVYYKEISFE.

A coiled-coil region spans residues 45 to 65 (NAEYHAAKERQLFIEARINEL).

Belongs to the GreA/GreB family.

Its function is as follows. Necessary for efficient RNA polymerase transcription elongation past template-encoded arresting sites. The arresting sites in DNA have the property of trapping a certain fraction of elongating RNA polymerases that pass through, resulting in locked ternary complexes. Cleavage of the nascent transcript by cleavage factors such as GreA or GreB allows the resumption of elongation from the new 3'terminus. GreA releases sequences of 2 to 3 nucleotides. The polypeptide is Transcription elongation factor GreA (Wolinella succinogenes (strain ATCC 29543 / DSM 1740 / CCUG 13145 / JCM 31913 / LMG 7466 / NCTC 11488 / FDC 602W) (Vibrio succinogenes)).